The chain runs to 331 residues: Hyaluronidase A (331 aa).

Intrachain disulfides connect cysteine 19–cysteine 308 and cysteine 185–cysteine 197. Residues asparagine 79 and asparagine 99 are each glycosylated (N-linked (GlcNAc...) asparagine). Residue glutamate 109 is the Proton donor of the active site. Asparagine 127 carries an N-linked (GlcNAc...) asparagine glycan. Asparagine 325 carries an N-linked (GlcNAc...) asparagine glycan.

The protein belongs to the glycosyl hydrolase 56 family. Expressed by the venom gland.

Its subcellular location is the secreted. It carries out the reaction Random hydrolysis of (1-&gt;4)-linkages between N-acetyl-beta-D-glucosamine and D-glucuronate residues in hyaluronate.. Hydrolyzes high molecular weight hyaluronic acid to produce small oligosaccharides. The chain is Hyaluronidase A from Vespula vulgaris (Yellow jacket).